The sequence spans 180 residues: Translation initiation factor IF-3 (180 aa).

Belongs to the IF-3 family. As to quaternary structure, monomer.

The protein resides in the cytoplasm. In terms of biological role, IF-3 binds to the 30S ribosomal subunit and shifts the equilibrium between 70S ribosomes and their 50S and 30S subunits in favor of the free subunits, thus enhancing the availability of 30S subunits on which protein synthesis initiation begins. The chain is Translation initiation factor IF-3 from Klebsiella pneumoniae.